Here is a 541-residue protein sequence, read N- to C-terminus: Protein yellow (541 aa).

Residues 1 to 21 (MFQDKGWILVTLITLVTPSWA) form the signal peptide. Asn-144 and Asn-215 each carry an N-linked (GlcNAc...) asparagine glycan. Residues 443 to 463 (QKPQTSWASSPPPPSRTYLPA) form a disordered region.

The protein belongs to the major royal jelly protein family.

The protein resides in the secreted. Controls the pigmentation pattern of the adult cuticle and larval mouth parts. The chain is Protein yellow (y) from Drosophila mauritiana (Fruit fly).